The sequence spans 221 residues: Glutathione S-transferase alpha-5 (221 aa).

Positions 3–83 (GKPVLHYFDG…YIATKYNLYG (81 aa)) constitute a GST N-terminal domain. Residue K4 is modified to N6-succinyllysine. Residues Y9, R45, 54–55 (QV), and 67–68 (QT) contribute to the glutathione site. The 123-residue stretch at 85-207 (DMKERALIDM…LQPGSQRKPF (123 aa)) folds into the GST C-terminal domain.

This sequence belongs to the GST superfamily. Alpha family. In terms of assembly, heterodimer of YC1 and YC2. Liver, nasal mucosa and epididymis.

The protein resides in the cytoplasm. It catalyses the reaction RX + glutathione = an S-substituted glutathione + a halide anion + H(+). Its function is as follows. Conjugation of reduced glutathione to a wide number of exogenous and endogenous hydrophobic electrophiles. Has substantial activity toward aflatoxin B1-8,9-epoxide. This Rattus norvegicus (Rat) protein is Glutathione S-transferase alpha-5 (Gsta5).